The primary structure comprises 441 residues: Ribulose bisphosphate carboxylase large chain (441 aa).

Position 5 is an N6,N6,N6-trimethyllysine (lysine 5). 2 residues coordinate substrate: asparagine 114 and threonine 164. Lysine 166 functions as the Proton acceptor in the catalytic mechanism. Lysine 168 provides a ligand contact to substrate. Lysine 192, aspartate 194, and glutamate 195 together coordinate Mg(2+). N6-carboxylysine is present on lysine 192. Histidine 285 functions as the Proton acceptor in the catalytic mechanism. Substrate-binding residues include arginine 286, histidine 318, and serine 370.

This sequence belongs to the RuBisCO large chain family. Type I subfamily. In terms of assembly, heterohexadecamer of 8 large chains and 8 small chains; disulfide-linked. The disulfide link is formed within the large subunit homodimers. Mg(2+) serves as cofactor. Post-translationally, the disulfide bond which can form in the large chain dimeric partners within the hexadecamer appears to be associated with oxidative stress and protein turnover.

It is found in the plastid. Its subcellular location is the chloroplast. The catalysed reaction is 2 (2R)-3-phosphoglycerate + 2 H(+) = D-ribulose 1,5-bisphosphate + CO2 + H2O. It catalyses the reaction D-ribulose 1,5-bisphosphate + O2 = 2-phosphoglycolate + (2R)-3-phosphoglycerate + 2 H(+). Functionally, ruBisCO catalyzes two reactions: the carboxylation of D-ribulose 1,5-bisphosphate, the primary event in carbon dioxide fixation, as well as the oxidative fragmentation of the pentose substrate in the photorespiration process. Both reactions occur simultaneously and in competition at the same active site. This Pellaea rotundifolia (Button fern) protein is Ribulose bisphosphate carboxylase large chain.